The primary structure comprises 244 residues: MSQLDLNALNELPKVDRVLALAETNAQLETLTAEERVAWALENLPGEYVLSSSFGIQAAVSLHLVNQIRPDIPVILTDTGYLFPETYQFIDELTDKLKLNLKVYRAGESPAWQEARYGKLWEQGVEGIEKYNEINKVEPMNRALKELNAQTWFAGLRREQSGSRAHLPVLAIQRGVFKVLPIIDWDNRTVYQYLQKHGLKYHPLWAQGYLSVGDTHTTRKWEPGMAEEETRFFGLKRECGLHEG.

The Nucleophile; cysteine thiosulfonate intermediate role is filled by Cys-239.

It belongs to the PAPS reductase family. CysH subfamily.

The protein resides in the cytoplasm. It catalyses the reaction [thioredoxin]-disulfide + sulfite + adenosine 3',5'-bisphosphate + 2 H(+) = [thioredoxin]-dithiol + 3'-phosphoadenylyl sulfate. The protein operates within sulfur metabolism; hydrogen sulfide biosynthesis; sulfite from sulfate: step 3/3. Its function is as follows. Catalyzes the formation of sulfite from phosphoadenosine 5'-phosphosulfate (PAPS) using thioredoxin as an electron donor. This is Phosphoadenosine 5'-phosphosulfate reductase from Salmonella typhi.